We begin with the raw amino-acid sequence, 198 residues long: Transmembrane protein 17 (198 aa).

N-linked (GlcNAc...) asparagine glycosylation is found at asparagine 13 and asparagine 23. The next 4 membrane-spanning stretches (helical) occupy residues 45–65 (MSLYFNTYFFPLWWVSSIMML), 78–98 (FIVVTIIILITLIEAIRLYLG), 110–130 (LAGFWLLSLLLQLPLILFLLF), and 142–162 (AVHIIFTIFLTFQVVSAFLTL).

This sequence belongs to the TMEM17 family. Part of the tectonic-like complex (also named B9 complex).

It is found in the cell projection. It localises to the cilium membrane. Its function is as follows. Transmembrane component of the tectonic-like complex, a complex localized at the transition zone of primary cilia and acting as a barrier that prevents diffusion of transmembrane proteins between the cilia and plasma membranes. Required for ciliogenesis and sonic hedgehog/SHH signaling. The chain is Transmembrane protein 17 (TMEM17) from Bos taurus (Bovine).